We begin with the raw amino-acid sequence, 297 residues long: Phosphoribosylaminoimidazole-succinocarboxamide synthase (297 aa).

This sequence belongs to the SAICAR synthetase family.

It carries out the reaction 5-amino-1-(5-phospho-D-ribosyl)imidazole-4-carboxylate + L-aspartate + ATP = (2S)-2-[5-amino-1-(5-phospho-beta-D-ribosyl)imidazole-4-carboxamido]succinate + ADP + phosphate + 2 H(+). The protein operates within purine metabolism; IMP biosynthesis via de novo pathway; 5-amino-1-(5-phospho-D-ribosyl)imidazole-4-carboxamide from 5-amino-1-(5-phospho-D-ribosyl)imidazole-4-carboxylate: step 1/2. This Corynebacterium glutamicum (strain R) protein is Phosphoribosylaminoimidazole-succinocarboxamide synthase.